The chain runs to 56 residues: Large ribosomal subunit protein bL32 (56 aa).

The segment covering 1-16 (MAVQKSKKSRSMRGMR) has biased composition (basic residues). Positions 1-33 (MAVQKSKKSRSMRGMRRSHDALTTSAVSVDATS) are disordered. The segment covering 21 to 33 (ALTTSAVSVDATS) has biased composition (polar residues).

This sequence belongs to the bacterial ribosomal protein bL32 family.

The protein is Large ribosomal subunit protein bL32 of Aliivibrio fischeri (strain ATCC 700601 / ES114) (Vibrio fischeri).